A 485-amino-acid chain; its full sequence is DNA polymerase subunit gamma-2 (485 aa).

Residues 28-65 (GQPELLTERSSPKGGHVKSHAELEGNGEHPEAPGSGEG) are disordered. Phosphoserine is present on Ser-38. Residues 46-58 (SHAELEGNGEHPE) show a composition bias toward basic and acidic residues.

Heterotrimer composed of a catalytic subunit and a homodimer of accessory subunits (POLG:POLG2).

The protein resides in the mitochondrion. It localises to the mitochondrion matrix. The protein localises to the mitochondrion nucleoid. In terms of biological role, accessory subunit of DNA polymerase gamma solely responsible for replication of mitochondrial DNA (mtDNA). Acts as an allosteric regulator of the holoenzyme activities. Enhances the polymerase activity and the processivity of POLG by increasing its interactions with the DNA template. Suppresses POLG exonucleolytic proofreading especially toward homopolymeric templates bearing mismatched termini. Binds to single-stranded DNA. The chain is DNA polymerase subunit gamma-2 from Homo sapiens (Human).